The primary structure comprises 309 residues: Glutaminase (309 aa).

Serine 65, asparagine 117, glutamate 162, asparagine 169, tyrosine 193, tyrosine 245, and valine 263 together coordinate substrate.

This sequence belongs to the glutaminase family. As to quaternary structure, homotetramer.

It carries out the reaction L-glutamine + H2O = L-glutamate + NH4(+). The chain is Glutaminase from Shouchella clausii (strain KSM-K16) (Alkalihalobacillus clausii).